Here is a 362-residue protein sequence, read N- to C-terminus: N-alpha-acetyltransferase 30 (362 aa).

The span at 1–20 shows a compositional bias: pro residues; that stretch reads MAEVPPGPSSLLPPPAPPAP. Disordered stretches follow at residues 1 to 26, 38 to 88, and 113 to 182; these read MAEV…VEPR, CSED…NGLI, and ATTA…EEDE. Phosphoserine is present on residues Ser-39 and Ser-55. Residues 39-48 are compositionally biased toward acidic residues; that stretch reads SEDEEDDEEH. Thr-117 carries the post-translational modification Phosphothreonine. Residues 149–165 show a composition bias toward low complexity; that stretch reads AVPSPVEAAAASDPAAA. Ser-152 carries the post-translational modification Phosphoserine. The span at 173 to 182 shows a compositional bias: acidic residues; it reads TEQEEEEEDE. A phosphoserine mark is found at Ser-190, Ser-196, and Ser-199. One can recognise an N-acetyltransferase domain in the interval 214 to 362; that stretch reads RYVRYESELQ…DALRLKLWLR (149 aa). Lys-233 is modified (N6-acetyllysine).

Belongs to the acetyltransferase family. MAK3 subfamily. As to quaternary structure, component of the N-terminal acetyltransferase C (NatC) complex, which is composed of NAA35, NAA38 and NAA30.

The protein localises to the cytoplasm. It localises to the nucleus. The enzyme catalyses N-terminal L-methionyl-L-leucyl-[protein] + acetyl-CoA = N-terminal N(alpha)-acetyl-L-methionyl-L-leucyl-[protein] + CoA + H(+). The catalysed reaction is N-terminal L-methionyl-L-isoleucyl-[protein] + acetyl-CoA = N-terminal N(alpha)-acetyl-L-methionyl-L-isoleucyl-[protein] + CoA + H(+). It carries out the reaction N-terminal L-methionyl-L-phenylalanyl-[protein] + acetyl-CoA = N-terminal N(alpha)-acetyl-L-methionyl-L-phenylalanyl-[protein] + CoA + H(+). It catalyses the reaction N-terminal L-methionyl-L-tryptophyl-[protein] + acetyl-CoA = N-terminal N(alpha)-acetyl-L-methionyl-L-tryptophyl-[protein] + CoA + H(+). The enzyme catalyses N-terminal L-methionyl-L-tyrosyl-[protein] + acetyl-CoA = N-terminal N(alpha)-acetyl-L-methionyl-L-tyrosyl-[protein] + CoA + H(+). Functionally, catalytic subunit of the N-terminal acetyltransferase C (NatC) complex. Catalyzes acetylation of the N-terminal methionine residues of peptides beginning with Met-Leu-Ala and Met-Leu-Gly. N-terminal acetylation protects proteins from ubiquitination and degradation by the N-end rule pathway. Necessary for the lysosomal localization and function of ARL8B sugeesting that ARL8B is a NatC substrate. This is N-alpha-acetyltransferase 30 (NAA30) from Homo sapiens (Human).